The following is a 533-amino-acid chain: DNA-directed RNA polymerase III subunit RPC3 (533 aa).

Residues Leu-162 to Val-181 form a disordered region. Ser-194 carries the post-translational modification Phosphoserine. The tract at residues Gly-197–Pro-228 is disordered. The segment covering Gly-211 to Ser-227 has biased composition (basic and acidic residues).

It belongs to the eukaryotic RPC3/POLR3C RNA polymerase subunit family. As to quaternary structure, component of the RNA polymerase III complex consisting of 17 subunits: a ten-subunit horseshoe-shaped catalytic core composed of POLR3A/RPC1, POLR3B/RPC2, POLR1C/RPAC1, POLR1D/RPAC2, POLR3K/RPC10, POLR2E/RPABC1, POLR2F/RPABC2, POLR2H/RPABC3, POLR2K/RPABC4 and POLR2L/RPABC5; a mobile stalk composed of two subunits POLR3H/RPC8 and CRCP/RPC9, protruding from the core and functioning primarily in transcription initiation; and additional subunits homologous to general transcription factors of the RNA polymerase II machinery, POLR3C/RPC3-POLR3F/RPC6-POLR3G/RPC7 heterotrimer required for transcription initiation and POLR3D/RPC4-POLR3E/RPC5 heterodimer involved in both transcription initiation and termination. Directly interacts with POLR3G/RPC7 and POLR3GL. Directly interacts with POLR3F/RPC6. Interacts with GTF3C4. As part of the RNA polymerase III complex, interacts with PKP2.

The protein localises to the nucleus. DNA-dependent RNA polymerase catalyzes the transcription of DNA into RNA using the four ribonucleoside triphosphates as substrates. Specific peripheric component of RNA polymerase III (Pol III) which synthesizes small non-coding RNAs including 5S rRNA, snRNAs, tRNAs and miRNAs from at least 500 distinct genomic loci. Part of POLR3C/RPC3-POLR3F/RPC6-POLR3G/RPC7 heterotrimer, coordinates the dynamics of Pol III stalk and clamp modules during the transition from apo to elongation state. Pol III plays a key role in sensing and limiting infection by intracellular bacteria and DNA viruses. Acts as a nuclear and cytosolic DNA sensor involved in innate immune response. Can sense non-self dsDNA that serves as template for transcription into dsRNA. The non-self RNA polymerase III transcripts, such as Epstein-Barr virus-encoded RNAs (EBERs) induce type I interferon and NF-kappa-B through the RIG-I pathway. Preferentially binds single-stranded DNA (ssDNA) in a sequence-independent manner. The chain is DNA-directed RNA polymerase III subunit RPC3 from Mus musculus (Mouse).